The following is a 507-amino-acid chain: GMP synthase [glutamine-hydrolyzing] (507 aa).

The Glutamine amidotransferase type-1 domain maps to threonine 9 to glycine 202. Cysteine 86 serves as the catalytic Nucleophile. Catalysis depends on residues histidine 176 and glutamate 178. The GMPS ATP-PPase domain occupies tryptophan 203 to arginine 395. Residue serine 230 to serine 236 participates in ATP binding.

In terms of assembly, homodimer.

The enzyme catalyses XMP + L-glutamine + ATP + H2O = GMP + L-glutamate + AMP + diphosphate + 2 H(+). Its pathway is purine metabolism; GMP biosynthesis; GMP from XMP (L-Gln route): step 1/1. In terms of biological role, catalyzes the synthesis of GMP from XMP. In Brucella melitensis biotype 1 (strain ATCC 23456 / CCUG 17765 / NCTC 10094 / 16M), this protein is GMP synthase [glutamine-hydrolyzing].